The chain runs to 274 residues: 2-dehydro-3-deoxyphosphooctonate aldolase (274 aa).

It belongs to the KdsA family.

The protein resides in the cytoplasm. It carries out the reaction D-arabinose 5-phosphate + phosphoenolpyruvate + H2O = 3-deoxy-alpha-D-manno-2-octulosonate-8-phosphate + phosphate. Its pathway is carbohydrate biosynthesis; 3-deoxy-D-manno-octulosonate biosynthesis; 3-deoxy-D-manno-octulosonate from D-ribulose 5-phosphate: step 2/3. It functions in the pathway bacterial outer membrane biogenesis; lipopolysaccharide biosynthesis. The protein is 2-dehydro-3-deoxyphosphooctonate aldolase of Rickettsia typhi (strain ATCC VR-144 / Wilmington).